Consider the following 441-residue polypeptide: Serine carboxypeptidase-like 1 (441 aa).

The first 29 residues, 1 to 29, serve as a signal peptide directing secretion; it reads MANKYVSSVLKSLLVLLHLVFLSKQHVDS. 3 disulfides stabilise this stretch: Cys-88–Cys-331, Cys-252–Cys-266, and Cys-290–Cys-297. A glycan (N-linked (GlcNAc...) asparagine) is linked at Asn-109. Ser-184 is an active-site residue. N-linked (GlcNAc...) asparagine glycosylation occurs at Asn-350. Asp-366 is a catalytic residue. Residue Asn-382 is glycosylated (N-linked (GlcNAc...) asparagine). Residue His-419 is part of the active site.

The protein belongs to the peptidase S10 family. Expressed in seedlings and roots.

It is found in the secreted. Its function is as follows. Probable carboxypeptidase. The polypeptide is Serine carboxypeptidase-like 1 (SCPL1) (Arabidopsis thaliana (Mouse-ear cress)).